We begin with the raw amino-acid sequence, 536 residues long: MKIFCLILFLISSFISTSLAVEPPPETIYQNFLQCFTNQTKAPPNSLADVVLPKTAAAFTPVLRAYIRNARFNTTATPKPAIVIAARSESHVQAAVICTKSLNIQLKTRSGGHDYEGVSYISHVPFFVLDMSNLRNITVDPATESAWVGAGATLGEVYYRIWEKTKSHGFPAGVCPTVGAGGHISGGGYGNMIRKYGLSVDYVTDAKIVDVNGQVLDRKGMGEDMFWAINGGGGASFGVILAFKIKLVPVPPTVTVFRVEKNLVENATEMVHKWQFVAPKTDPGLFMRLLLQPVTRNKMQTVRASVVALFLGDQNTVMSMLTKEFPELGLKKENCTEMTWIQSVMWWANNDNATQIKPEILLDRNPDMATFGKRKSDFVEKEITKDGLDFLFKKMIEVGKIGLVFNPYGGIMSTVATTKTPFPHRKKLYKIQHSMNWKDPGTEAETSFLQKAKSFYSYMAPFVTKNPRHTYINYRDLDIGVNTPGPNSYRVAEVFGRMYFGENFDRLVKVKTAVDPQNFFRDEQSIPTLPGKPARR.

An N-terminal signal peptide occupies residues 1 to 20; that stretch reads MKIFCLILFLISSFISTSLA. Residues Cys35 and Cys98 are joined by a disulfide bond. N-linked (GlcNAc...) asparagine glycosylation is found at Asn38, Asn73, Asn136, Asn266, Asn334, and Asn352. Residues 76 to 250 enclose the FAD-binding PCMH-type domain; the sequence is ATPKPAIVIA…LAFKIKLVPV (175 aa). The segment at residues 113–175 is a cross-link (6-(S-cysteinyl)-8alpha-(pros-histidyl)-FAD (His-Cys)); sequence HDYEGVSYIS…KSHGFPAGVC (63 aa).

Belongs to the oxygen-dependent FAD-linked oxidoreductase family. FAD serves as cofactor. In terms of processing, the FAD cofactor is bound via a bicovalent 6-S-cysteinyl, 8alpha-N1-histidyl FAD linkage.

The protein resides in the secreted. It localises to the cell wall. The polypeptide is Berberine bridge enzyme-like 2 (Arabidopsis thaliana (Mouse-ear cress)).